The primary structure comprises 203 residues: LexA repressor (203 aa).

A DNA-binding region (H-T-H motif) is located at residues 30-50; the sequence is VREICQAVSLKSTSTVHGHLK. Catalysis depends on for autocatalytic cleavage activity residues Ser-127 and Lys-164.

The protein belongs to the peptidase S24 family. As to quaternary structure, homodimer.

The enzyme catalyses Hydrolysis of Ala-|-Gly bond in repressor LexA.. Its function is as follows. Represses a number of genes involved in the response to DNA damage (SOS response), including recA and lexA. In the presence of single-stranded DNA, RecA interacts with LexA causing an autocatalytic cleavage which disrupts the DNA-binding part of LexA, leading to derepression of the SOS regulon and eventually DNA repair. The chain is LexA repressor from Clostridium perfringens (strain 13 / Type A).